Here is a 777-residue protein sequence, read N- to C-terminus: Subtilisin-like protease SBT3.3 (777 aa).

The N-terminal stretch at 1–24 (MRSFRSSILLVLLSLITVLNATRA) is a signal peptide. A propeptide spans 25-111 (RSETESKVHI…VIPDGFHELA (87 aa)) (removed in mature form). Residues 32–109 (VHIVYLGEKK…VHVIPDGFHE (78 aa)) enclose the Inhibitor I9 domain. In terms of domain architecture, Peptidase S8 spans 115-624 (TWEYLGLSSA…GGIVNPEKAA (510 aa)). Residue N131 is glycosylated (N-linked (GlcNAc...) asparagine). The active-site Charge relay system is D145. An N-linked (GlcNAc...) asparagine glycan is attached at N204. The active-site Charge relay system is H220. Residues N235, N397, N412, N508, and N540 are each glycosylated (N-linked (GlcNAc...) asparagine). Positions 403 to 481 (VCESLNLNPN…ELGTDILSYI (79 aa)) constitute a PA domain. The active-site Charge relay system is the S555. N647 carries an N-linked (GlcNAc...) asparagine glycan.

This sequence belongs to the peptidase S8 family.

It localises to the secreted. The protein resides in the extracellular space. It is found in the extracellular matrix. Functionally, serine protease that plays a role in the control of the establishment of immune priming and systemic induced resistance. This Arabidopsis thaliana (Mouse-ear cress) protein is Subtilisin-like protease SBT3.3.